We begin with the raw amino-acid sequence, 681 residues long: Mating-type protein beta1-1 (681 aa).

A DNA-binding region (homeobox; TALE-type) is located at residues 165–227 (DKNEPTSPTP…DARRRIGWNE (63 aa)). The span at 307–318 (LKNDEARRKREA) shows a compositional bias: basic and acidic residues. Disordered regions lie at residues 307 to 341 (LKNDEARRKREASTVGIINQRARHAYPTPERSPAS), 353 to 381 (AIDSDKLPSVGRKRRRSLESDETVSSPLC), and 394 to 466 (SPVK…SDPF). Residues 413 to 430 (TSAAPSPQPSLLPKLTPT) are compositionally biased toward low complexity.

It belongs to the TALE/M-ATYP homeobox family. In terms of assembly, may dimerize.

It localises to the nucleus. In terms of biological role, has a major regulatory role in sexual and asexual development. It may bind DNA itself or it may have a role in preventing DNA-binding of another protein. This is Mating-type protein beta1-1 from Coprinopsis cinerea (Inky cap fungus).